The chain runs to 338 residues: Short-chain dehydrogenase/reductase phmF (338 aa).

Leu-46, Arg-71, Asp-96, and Asn-123 together coordinate NADP(+). Catalysis depends on Ser-177, which acts as the Proton donor. Residues Tyr-211 and Lys-215 each contribute to the NADP(+) site. The Proton acceptor role is filled by Tyr-211. Lys-215 acts as the Lowers pKa of active site Tyr in catalysis.

The protein belongs to the short-chain dehydrogenases/reductases (SDR) family.

Its pathway is mycotoxin biosynthesis. Its function is as follows. Short-chain dehydrogenase/reductase; part of the gene cluster that mediates the biosynthesis of the mycotoxins phomacins, leucine-derived cytochalasans with potent actin polymerization-inhibitory activities and monocot-specific antigerminative activities. The first step in the pathway is catalyzed by the hybrid PKS-NRPS phmA, assisted by the enoyl reductase phmE, that are responsible for fusion of the leucine precursor and the polyketide backbone to produce a 2-pyrrolidone intermediate. The polyketide synthase module (PKS) of phmA is responsible for the synthesis of the polyketide backbone and the downstream nonribosomal peptide synthetase (NRPS) amidates the carboxyl end of the polyketide with the leucine precursor. Because phmA lacks a designated enoylreductase (ER) domain, the required activity is provided the enoyl reductase phmE. Reduction by the hydrolyase phmG, followed by dehydration and intra-molecular Diels-Alder cyclization by the Diels-Alderase phmD then yield the required isoindolone-fused macrocycle. A number of oxidative steps catalyzed by the tailoring cytochrome P450 monooxygenase phmB, the FAD-linked oxidoreductase phmC and the short-chain dehydrogenase/reductase phmF, are further required to afford the final products, phomacin D and phomacin E. In Phaeosphaeria nodorum (strain SN15 / ATCC MYA-4574 / FGSC 10173) (Glume blotch fungus), this protein is Short-chain dehydrogenase/reductase phmF.